The following is a 210-amino-acid chain: Small ribosomal subunit protein uS3 (210 aa).

One can recognise a KH type-2 domain in the interval 17-86 (IDEFLEKELR…NPQIDVQEIK (70 aa)).

This sequence belongs to the universal ribosomal protein uS3 family. As to quaternary structure, part of the 30S ribosomal subunit.

Functionally, binds the lower part of the 30S subunit head. In Pyrococcus horikoshii (strain ATCC 700860 / DSM 12428 / JCM 9974 / NBRC 100139 / OT-3), this protein is Small ribosomal subunit protein uS3.